The primary structure comprises 458 residues: Dihydrolipoyllysine-residue acetyltransferase component of pyruvate dehydrogenase complex, mitochondrial (458 aa).

A mitochondrion-targeting transit peptide spans 1-28 (MIVPVLSRQALRHASVARVALPSLTRWY). Positions 34–110 (HTVVKMPALS…AVGNPIAILV (77 aa)) constitute a Lipoyl-binding domain. The residue at position 75 (K75) is an N6-lipoyllysine. A disordered region spans residues 126-164 (DAGGETSPAVPKDEPKNESTASAPTPAPTPAPEPENTSF). The region spanning 177-214 (NALPAAKRLAREKGIDLRNVKGSGPGGKITEEDVKKAL) is the Peripheral subunit-binding (PSBD) domain. Residues H431 and D435 contribute to the active site.

Belongs to the 2-oxoacid dehydrogenase family. The cofactor is (R)-lipoate.

Its subcellular location is the mitochondrion matrix. It catalyses the reaction N(6)-[(R)-dihydrolipoyl]-L-lysyl-[protein] + acetyl-CoA = N(6)-[(R)-S(8)-acetyldihydrolipoyl]-L-lysyl-[protein] + CoA. Functionally, the pyruvate dehydrogenase complex catalyzes the overall conversion of pyruvate to acetyl-CoA and CO(2). It contains multiple copies of three enzymatic components: pyruvate dehydrogenase (E1), dihydrolipoamide acetyltransferase (E2) and lipoamide dehydrogenase (E3). The polypeptide is Dihydrolipoyllysine-residue acetyltransferase component of pyruvate dehydrogenase complex, mitochondrial (mrp-3) (Neurospora crassa (strain ATCC 24698 / 74-OR23-1A / CBS 708.71 / DSM 1257 / FGSC 987)).